We begin with the raw amino-acid sequence, 203 residues long: Auxin-induced protein 22E (203 aa).

The EAR-like (transcriptional repression) signature appears at 15-19 (LRLGL). The segment at 15-77 (LRLGLPGSDE…DHNEDSVQPA (63 aa)) is disordered. A compositionally biased stretch (basic and acidic residues) spans 43–52 (SSPELEESRC). A compositionally biased stretch (low complexity) spans 58–67 (SDSSDSTTTS). The region spanning 107 to 199 (GMYLKVSMAG…RIIKGSEAKG (93 aa)) is the PB1 domain.

It belongs to the Aux/IAA family. Homodimers and heterodimers.

It localises to the nucleus. In terms of biological role, aux/IAA proteins are short-lived transcriptional factors that function as repressors of early auxin response genes at low auxin concentrations. Repression is thought to result from the interaction with auxin response factors (ARFs), proteins that bind to the auxin-responsive promoter element (AuxRE). Formation of heterodimers with ARF proteins may alter their ability to modulate early auxin response genes expression. The chain is Auxin-induced protein 22E (AUX22E) from Vigna radiata var. radiata (Mung bean).